The sequence spans 329 residues: 7,8-didemethyl-8-hydroxy-5-deazariboflavin synthase (329 aa).

In terms of domain architecture, Radical SAM core spans 1-235 (MFIPVTNICR…SDVSVQVAPN (235 aa)). C9, C13, and C16 together coordinate [4Fe-4S] cluster.

This sequence belongs to the radical SAM superfamily. CofG family. Consists of two subunits, CofG and CofH. Requires [4Fe-4S] cluster as cofactor.

It catalyses the reaction 5-amino-5-(4-hydroxybenzyl)-6-(D-ribitylimino)-5,6-dihydrouracil + S-adenosyl-L-methionine = 7,8-didemethyl-8-hydroxy-5-deazariboflavin + 5'-deoxyadenosine + L-methionine + NH4(+) + H(+). The protein operates within cofactor biosynthesis; coenzyme F0 biosynthesis. In terms of biological role, catalyzes the radical-mediated synthesis of 7,8-didemethyl-8-hydroxy-5-deazariboflavin from 5-amino-5-(4-hydroxybenzyl)-6-(D-ribitylimino)-5,6-dihydrouracil. This is 7,8-didemethyl-8-hydroxy-5-deazariboflavin synthase from Methanosarcina acetivorans (strain ATCC 35395 / DSM 2834 / JCM 12185 / C2A).